Here is a 472-residue protein sequence, read N- to C-terminus: Na(+)/H(+) antiporter NhaA 1 (472 aa).

Helical transmembrane passes span Thr-34–Trp-54, Gly-86–Gly-106, Leu-116–Ala-136, Gly-146–Gly-166, Val-175–Phe-195, Thr-203–Phe-223, Ile-227–Ala-247, Pro-324–Asp-344, Val-353–Phe-373, Val-394–Leu-414, and Leu-428–Ile-448.

Belongs to the NhaA Na(+)/H(+) (TC 2.A.33) antiporter family.

The protein localises to the cell inner membrane. It catalyses the reaction Na(+)(in) + 2 H(+)(out) = Na(+)(out) + 2 H(+)(in). Functionally, na(+)/H(+) antiporter that extrudes sodium in exchange for external protons. This Pseudoalteromonas atlantica (strain T6c / ATCC BAA-1087) protein is Na(+)/H(+) antiporter NhaA 1.